Consider the following 142-residue polypeptide: Transcription antitermination protein NusB (142 aa).

It belongs to the NusB family.

Involved in transcription antitermination. Required for transcription of ribosomal RNA (rRNA) genes. Binds specifically to the boxA antiterminator sequence of the ribosomal RNA (rrn) operons. In Latilactobacillus sakei subsp. sakei (strain 23K) (Lactobacillus sakei subsp. sakei), this protein is Transcription antitermination protein NusB.